The chain runs to 61 residues: Small ribosomal subunit protein uS14 (61 aa).

Residues cysteine 24, cysteine 27, cysteine 40, and cysteine 43 each contribute to the Zn(2+) site.

It belongs to the universal ribosomal protein uS14 family. Zinc-binding uS14 subfamily. Part of the 30S ribosomal subunit. Contacts proteins S3 and S10. Requires Zn(2+) as cofactor.

Its function is as follows. Binds 16S rRNA, required for the assembly of 30S particles and may also be responsible for determining the conformation of the 16S rRNA at the A site. In Campylobacter lari (strain RM2100 / D67 / ATCC BAA-1060), this protein is Small ribosomal subunit protein uS14.